A 254-amino-acid chain; its full sequence is Axonemal dynein light intermediate polypeptide 1 (254 aa).

The tract at residues 1–55 is disordered; it reads MIPPADSLLKHDNPVLISKNTERKSPKSRPLKVSSPQTVLTAPVPPPPKPKTPLL. Residues 175–245 adopt a coiled-coil conformation; it reads ALQAEQGKSD…KRTNQQLKAQ (71 aa).

Belongs to the inner dynein arm light chain family.

It is found in the cell projection. The protein resides in the cilium. Its subcellular location is the flagellum. The protein localises to the dynein axonemal particle. It localises to the cytoplasm. Involved in sperm flagellum assembly. The sequence is that of Axonemal dynein light intermediate polypeptide 1 from Xenopus laevis (African clawed frog).